Consider the following 233-residue polypeptide: uncharacterized protein (233 aa).

The protein belongs to the asfivirus H233R family.

This is an uncharacterized protein from African swine fever virus (strain Badajoz 1971 Vero-adapted) (Ba71V).